The sequence spans 99 residues: A-type ATP synthase subunit F (99 aa).

Belongs to the V-ATPase F subunit family. Has multiple subunits with at least A(3), B(3), C, D, E, F, H, I and proteolipid K(x).

Its subcellular location is the cell membrane. Its function is as follows. Component of the A-type ATP synthase that produces ATP from ADP in the presence of a proton gradient across the membrane. The protein is A-type ATP synthase subunit F of Methanococcus vannielii (strain ATCC 35089 / DSM 1224 / JCM 13029 / OCM 148 / SB).